The chain runs to 732 residues: Catalase-peroxidase (732 aa).

Positions 97–220 form a cross-link, tryptophyl-tyrosyl-methioninium (Trp-Tyr) (with M-246); the sequence is WHSAGTYRTS…LAAVQMGLIY (124 aa). Histidine 98 (proton acceptor) is an active-site residue. Positions 220 to 246 form a cross-link, tryptophyl-tyrosyl-methioninium (Tyr-Met) (with W-97); that stretch reads YVNPEGPDGNPDPVAAGRDIRETFARM. Position 261 (histidine 261) interacts with heme b.

The protein belongs to the peroxidase family. Peroxidase/catalase subfamily. As to quaternary structure, homodimer or homotetramer. Heme b serves as cofactor. In terms of processing, formation of the three residue Trp-Tyr-Met cross-link is important for the catalase, but not the peroxidase activity of the enzyme.

The catalysed reaction is H2O2 + AH2 = A + 2 H2O. It catalyses the reaction 2 H2O2 = O2 + 2 H2O. Its function is as follows. Bifunctional enzyme with both catalase and broad-spectrum peroxidase activity. This Pelodictyon phaeoclathratiforme (strain DSM 5477 / BU-1) protein is Catalase-peroxidase.